A 432-amino-acid polypeptide reads, in one-letter code: Trigger factor (432 aa).

Positions E161–P246 constitute a PPIase FKBP-type domain.

Belongs to the FKBP-type PPIase family. Tig subfamily.

The protein resides in the cytoplasm. The enzyme catalyses [protein]-peptidylproline (omega=180) = [protein]-peptidylproline (omega=0). Involved in protein export. Acts as a chaperone by maintaining the newly synthesized protein in an open conformation. Functions as a peptidyl-prolyl cis-trans isomerase. The sequence is that of Trigger factor from Enterobacter sp. (strain 638).